A 224-amino-acid polypeptide reads, in one-letter code: PKHD-type hydroxylase KPN78578_12210 (224 aa).

The Fe2OG dioxygenase domain occupies 77–176 (TISAPLFNRY…RQASFLWIQS (100 aa)). Residues histidine 95, aspartate 97, and histidine 157 each contribute to the Fe cation site. Arginine 167 serves as a coordination point for 2-oxoglutarate.

It depends on Fe(2+) as a cofactor. L-ascorbate is required as a cofactor.

The polypeptide is PKHD-type hydroxylase KPN78578_12210 (Klebsiella pneumoniae subsp. pneumoniae (strain ATCC 700721 / MGH 78578)).